Consider the following 488-residue polypeptide: Phenylalanine--tRNA ligase alpha subunit (488 aa).

L-phenylalanine-binding positions include threonine 332, 371-373 (QLD), and phenylalanine 410. Residue glutamate 412 participates in Mg(2+) binding. Phenylalanine 435 lines the L-phenylalanine pocket.

The protein belongs to the class-II aminoacyl-tRNA synthetase family. Phe-tRNA synthetase alpha subunit type 2 subfamily. As to quaternary structure, tetramer of two alpha and two beta subunits. Requires Mg(2+) as cofactor.

The protein localises to the cytoplasm. The catalysed reaction is tRNA(Phe) + L-phenylalanine + ATP = L-phenylalanyl-tRNA(Phe) + AMP + diphosphate + H(+). The sequence is that of Phenylalanine--tRNA ligase alpha subunit from Aeropyrum pernix (strain ATCC 700893 / DSM 11879 / JCM 9820 / NBRC 100138 / K1).